Consider the following 343-residue polypeptide: MIYRKIDDRSVSVVPQNPDDLFALRRVVRAGDRVAGSTTRAIRKEREYARPDRGERVRIKISLEVEAASLDGMLGRLRLGGTIHESSSEQVKRGSHHSLSVHAGDAISITKDWGPGERKLLRGSGGQGFVLVAVDTSECGIARLHGTHLEMITTLRSGSPGKRYKTSFNIGGYLEAAAAAAGLAVRKGDSLIVFGPGETRKKLANLMQGRRLPEPAVVEGIDSAGEDGIRLFTRSDAMRDSMSGSRMARVMDIIDSVMLLASKKSAKFSMGYAETRAAAEAGAIESLVFSDGLISAAGEQQAVDFLNNAQATGAGIFGADSTTDAGLRVDGLGGVIATLRFKP.

Belongs to the eukaryotic release factor 1 family. Pelota subfamily. Monomer. It depends on a divalent metal cation as a cofactor.

The protein resides in the cytoplasm. May function in recognizing stalled ribosomes, interact with stem-loop structures in stalled mRNA molecules, and effect endonucleolytic cleavage of the mRNA. May play a role in the release non-functional ribosomes and degradation of damaged mRNAs. Has endoribonuclease activity. In Cenarchaeum symbiosum (strain A), this protein is Protein pelota homolog.